The sequence spans 783 residues: DNA polymerase II (783 aa).

It belongs to the DNA polymerase type-B family.

The catalysed reaction is DNA(n) + a 2'-deoxyribonucleoside 5'-triphosphate = DNA(n+1) + diphosphate. DNA polymerase II activity is regulated by the lexA gene during the SOS response. Functionally, thought to be involved in DNA repair and/or mutagenesis. Its processivity is enhanced by the beta sliding clamp (dnaN) and clamp loader. This is DNA polymerase II (polB) from Escherichia coli (strain K12).